A 120-amino-acid chain; its full sequence is NAD(P)H-quinone oxidoreductase subunit 3 (120 aa).

Helical transmembrane passes span 2–22 (FVLT…LVPV), 64–84 (MFAL…PWAV), and 89–109 (LGLL…VALV).

This sequence belongs to the complex I subunit 3 family. As to quaternary structure, NDH-1 can be composed of about 15 different subunits; different subcomplexes with different compositions have been identified which probably have different functions.

Its subcellular location is the cellular thylakoid membrane. It carries out the reaction a plastoquinone + NADH + (n+1) H(+)(in) = a plastoquinol + NAD(+) + n H(+)(out). The catalysed reaction is a plastoquinone + NADPH + (n+1) H(+)(in) = a plastoquinol + NADP(+) + n H(+)(out). Functionally, NDH-1 shuttles electrons from an unknown electron donor, via FMN and iron-sulfur (Fe-S) centers, to quinones in the respiratory and/or the photosynthetic chain. The immediate electron acceptor for the enzyme in this species is believed to be plastoquinone. Couples the redox reaction to proton translocation, and thus conserves the redox energy in a proton gradient. Cyanobacterial NDH-1 also plays a role in inorganic carbon-concentration. The protein is NAD(P)H-quinone oxidoreductase subunit 3 (ndhC) of Synechocystis sp. (strain ATCC 27184 / PCC 6803 / Kazusa).